Reading from the N-terminus, the 557-residue chain is Copine-4 (557 aa).

2 consecutive C2 domains span residues 3–131 (KMSN…SKSL) and 137–264 (TAGK…VQWE). 5 residues coordinate Ca(2+): Asp170, Asp176, Asp232, Asp234, and Asp240. Positions 305-507 (QIQFTVAIDF…VLRDIVQFVP (203 aa)) constitute a VWFA domain.

This sequence belongs to the copine family. As to quaternary structure, interacts (via VWFA domain) with ACTB, BCOR, BICD2, CCDC22, CDC42BPB, CEP162, MYCBP2, NONO, PDCD6, PITPNM2, RDX, SKIL, SKT, SPTBN1, UBE2O and WTAP. Ca(2+) serves as cofactor.

In terms of biological role, probable calcium-dependent phospholipid-binding protein that may play a role in calcium-mediated intracellular processes. The sequence is that of Copine-4 from Mus musculus (Mouse).